The sequence spans 550 residues: Arginine--tRNA ligase (550 aa).

The 'HIGH' region signature appears at 130 to 140 (ANPTGPIHLGG).

Belongs to the class-I aminoacyl-tRNA synthetase family. In terms of assembly, monomer.

It is found in the cytoplasm. It catalyses the reaction tRNA(Arg) + L-arginine + ATP = L-arginyl-tRNA(Arg) + AMP + diphosphate. This is Arginine--tRNA ligase from Corynebacterium glutamicum (strain R).